Here is a 429-residue protein sequence, read N- to C-terminus: Serine hydroxymethyltransferase (429 aa).

(6S)-5,6,7,8-tetrahydrofolate-binding positions include L133 and 137–139; that span reads GHL. The residue at position 243 (K243) is an N6-(pyridoxal phosphate)lysine. E259 contacts (6S)-5,6,7,8-tetrahydrofolate.

Belongs to the SHMT family. As to quaternary structure, homodimer. Pyridoxal 5'-phosphate is required as a cofactor.

Its subcellular location is the cytoplasm. The catalysed reaction is (6R)-5,10-methylene-5,6,7,8-tetrahydrofolate + glycine + H2O = (6S)-5,6,7,8-tetrahydrofolate + L-serine. It functions in the pathway one-carbon metabolism; tetrahydrofolate interconversion. It participates in amino-acid biosynthesis; glycine biosynthesis; glycine from L-serine: step 1/1. Functionally, catalyzes the reversible interconversion of serine and glycine with tetrahydrofolate (THF) serving as the one-carbon carrier. This reaction serves as the major source of one-carbon groups required for the biosynthesis of purines, thymidylate, methionine, and other important biomolecules. Also exhibits THF-independent aldolase activity toward beta-hydroxyamino acids, producing glycine and aldehydes, via a retro-aldol mechanism. In Aster yellows witches'-broom phytoplasma (strain AYWB), this protein is Serine hydroxymethyltransferase.